The chain runs to 58 residues: Apelin receptor early endogenous ligand (58 aa).

The first 22 residues, 1 to 22, serve as a signal peptide directing secretion; it reads MRFFHPLYLLLLLLTVLVLISA.

This sequence belongs to the Elabela/Toddler family. Interacts with aplnra and aplnrb. As to expression, expressed ubiquitously during late blastula and gastrula stages and becomes restricted to the lateral mesoderm, endoderm, and anterior and posterior notochord after gastrulation.

The protein resides in the secreted. Its subcellular location is the extracellular space. Functionally, peptide hormone that functions as endogenous ligand for the G-protein-coupled apelin receptor (aplnra and/or aplnrb), that plays a role in the regulation of normal cardiovascular function and fluid homeostasis. Functions as a balanced agonist activating both G(i) protein pathway and beta-arrestin pathway of APLNR. Downstream G proteins activation, apelin can inhibit cAMP production and activate key intracellular effectors such as ERKs. On the other hand, APLNR activation induces beta-arrestin recruitment to the membrane leading to desensitization and internalization of the receptor. Required for mesendodermal differentiation, blood vessels formation and heart morphogenesis during early development and for adult cardiovascular homeostasis. Acts as a motogen by promoting mesendodermal cell migration during gastrulation by binding and activating the apelin receptor. Acts as an early embryonic regulator of cellular movement with a role in migration and development of cardiac progenitor cells. May act as a chemoattractant for the activation of angioblast migration toward the embryonic midline, i.e. the position of the future vessel formation, during vasculogenesis. Positively regulates sinus venosus (SV)-derived endothelial cells migration into the developing heart to promote coronary blood vessel sprouting. Involved in cardioprotective functions during heart failure. Mediates myocardial contractility in an ERK1/2-dependent manner. This Danio rerio (Zebrafish) protein is Apelin receptor early endogenous ligand.